We begin with the raw amino-acid sequence, 436 residues long: 3-ketoacyl-CoA thiolase (436 aa).

Cys-99 (acyl-thioester intermediate) is an active-site residue. Active-site proton acceptor residues include His-392 and Cys-422.

The protein belongs to the thiolase-like superfamily. Thiolase family. As to quaternary structure, heterotetramer of two alpha chains (FadJ) and two beta chains (FadI).

The protein resides in the cytoplasm. The enzyme catalyses an acyl-CoA + acetyl-CoA = a 3-oxoacyl-CoA + CoA. It participates in lipid metabolism; fatty acid beta-oxidation. Functionally, catalyzes the final step of fatty acid oxidation in which acetyl-CoA is released and the CoA ester of a fatty acid two carbons shorter is formed. This Pseudoalteromonas translucida (strain TAC 125) protein is 3-ketoacyl-CoA thiolase.